The primary structure comprises 428 residues: Magnesium transporter MRS2-C (428 aa).

2 consecutive transmembrane segments (helical) span residues 364-384 and 400-420; these read LLLT…GVFG and WTLV…IWYF. Residues 384 to 386 carry the Required for magnesium transport activity motif; sequence GMN.

This sequence belongs to the CorA metal ion transporter (MIT) (TC 1.A.35.5) family.

The protein localises to the membrane. Functionally, magnesium transporter that may mediate the influx of magnesium. This chain is Magnesium transporter MRS2-C, found in Oryza sativa subsp. indica (Rice).